The chain runs to 611 residues: Pseudomonine synthase PmsE (611 aa).

One can recognise a Carrier domain in the interval 533–608 (VSVENTRTWL…SWWALVEARQ (76 aa)). Ser569 bears the O-(pantetheine 4'-phosphoryl)serine mark.

Belongs to the ATP-dependent AMP-binding enzyme family. It depends on pantetheine 4'-phosphate as a cofactor.

The catalysed reaction is salicylate + holo-[ACP] + ATP = salicyl-[ACP] + AMP + diphosphate. The protein operates within siderophore biosynthesis; pseudomonine biosynthesis. In terms of biological role, involved in the biosynthesis of the siderophore pseudomonine. Specifically adenylates salicylate and loads it onto its peptidyl carrier domain, via a thioester linkage to the phosphopanthetheine moiety. This is Pseudomonine synthase PmsE from Pseudomonas entomophila (strain L48).